The chain runs to 20 residues: Pregnancy-associated glycoprotein 55h (20 aa).

A glycan (N-linked (GlcNAc...) asparagine) is linked at N4.

Belongs to the peptidase A1 family. Highly expressed in the placenta between day 60 and day 100 of gestation.

The protein localises to the secreted. It is found in the extracellular space. The chain is Pregnancy-associated glycoprotein 55h from Ovis aries (Sheep).